Consider the following 963-residue polypeptide: Protocadherin alpha-C1 (963 aa).

The N-terminal stretch at 1 to 18 (MVGWGVAVLCLWVSCGAA) is a signal peptide. Cadherin domains follow at residues 19-124 (AGQL…SPLF), 125-233 (PAGD…APVF), 234-340 (ERSV…APEL), 349-445 (VPED…TPSF), and 446-555 (PQPQ…YPVI). Topologically, residues 19 to 683 (AGQLEYSVPE…GGQLSAQNLY (665 aa)) are extracellular. Residue Asn-38 is glycosylated (N-linked (GlcNAc...) asparagine). N-linked (GlcNAc...) asparagine glycans are attached at residues Asn-248 and Asn-274. Asn-562 is a glycosylation site (N-linked (GlcNAc...) asparagine). In terms of domain architecture, Cadherin 6 spans 570–667 (VPRSARTGHL…NSVPQLLPDF (98 aa)). The helical transmembrane segment at 684–704 (LVIALACISFLFLGCLLFFVC) threads the bilayer. Topologically, residues 705–963 (TKLHQSPGCC…GNSTTDNSDQ (259 aa)) are cytoplasmic. PXXP repeat units follow at residues 812-815 (PRQP), 845-848 (PGGP), 886-889 (PGNP), and 904-907 (PGSP). Positions 812 to 907 (PRQPNPDWRY…PDKFIIPGSP (96 aa)) are 4 X 4 AA repeats of P-X-X-P. The segment at 844–902 (GPGGPDQQWPTVSSATPEPEAGEVSPPVGAGVNSNSWTFKYGPGNPKQSGPGELPDKFI) is disordered. The segment at 914 to 963 (QEPANSQIDKSDFITFGKKEETKKKKKKKKGNKTQEKKEKGNSTTDNSDQ) is disordered. Over residues 922–936 (DKSDFITFGKKEETK) the composition is skewed to basic and acidic residues.

The protein resides in the cell membrane. In terms of biological role, potential calcium-dependent cell-adhesion protein. May be involved in the establishment and maintenance of specific neuronal connections in the brain. In Pan troglodytes (Chimpanzee), this protein is Protocadherin alpha-C1 (PCDHAC1).